The chain runs to 383 residues: Succinyl-diaminopimelate desuccinylase (383 aa).

Position 74 (histidine 74) interacts with Zn(2+). Residue aspartate 76 is part of the active site. Aspartate 107 contacts Zn(2+). Glutamate 141 acts as the Proton acceptor in catalysis. Zn(2+) is bound by residues glutamate 142, glutamate 170, and histidine 356.

Belongs to the peptidase M20A family. DapE subfamily. Homodimer. The cofactor is Zn(2+). Co(2+) serves as cofactor.

The catalysed reaction is N-succinyl-(2S,6S)-2,6-diaminopimelate + H2O = (2S,6S)-2,6-diaminopimelate + succinate. It participates in amino-acid biosynthesis; L-lysine biosynthesis via DAP pathway; LL-2,6-diaminopimelate from (S)-tetrahydrodipicolinate (succinylase route): step 3/3. In terms of biological role, catalyzes the hydrolysis of N-succinyl-L,L-diaminopimelic acid (SDAP), forming succinate and LL-2,6-diaminopimelate (DAP), an intermediate involved in the bacterial biosynthesis of lysine and meso-diaminopimelic acid, an essential component of bacterial cell walls. The polypeptide is Succinyl-diaminopimelate desuccinylase (Cupriavidus pinatubonensis (strain JMP 134 / LMG 1197) (Cupriavidus necator (strain JMP 134))).